A 220-amino-acid chain; its full sequence is LHFPL tetraspan subfamily member 1 protein (220 aa).

The signal sequence occupies residues 1–20; sequence MRNSLTMVGTFWAFLSLVTA. The next 2 membrane-spanning stretches (helical) occupy residues 86–106 and 122–142; these read VVTGAGCALLLLVALAAVLGC and AAQFVGGLLISAGCALYPLGW. N-linked (GlcNAc...) asparagine glycosylation is present at Asn-153. Residues 165-185 form a helical membrane-spanning segment; that stretch reads LGWAYYCAGGGAAAAMLICTW.

This sequence belongs to the LHFP family. Widely expressed. Strongly expressed in vagina and ovary. Weakly expressed in spleen, kidney, thymus, testis, brain, lung, intestine and uterus.

Its subcellular location is the membrane. This Mus musculus (Mouse) protein is LHFPL tetraspan subfamily member 1 protein.